Consider the following 349-residue polypeptide: tRNA N6-adenosine threonylcarbamoyltransferase (349 aa).

2 residues coordinate Fe cation: histidine 111 and histidine 115. Substrate-binding positions include 134 to 138 (LVSGG), aspartate 167, glycine 180, aspartate 184, and asparagine 279. Aspartate 307 serves as a coordination point for Fe cation.

It belongs to the KAE1 / TsaD family. Requires Fe(2+) as cofactor.

The protein resides in the cytoplasm. The catalysed reaction is L-threonylcarbamoyladenylate + adenosine(37) in tRNA = N(6)-L-threonylcarbamoyladenosine(37) in tRNA + AMP + H(+). Functionally, required for the formation of a threonylcarbamoyl group on adenosine at position 37 (t(6)A37) in tRNAs that read codons beginning with adenine. Is involved in the transfer of the threonylcarbamoyl moiety of threonylcarbamoyl-AMP (TC-AMP) to the N6 group of A37, together with TsaE and TsaB. TsaD likely plays a direct catalytic role in this reaction. The chain is tRNA N6-adenosine threonylcarbamoyltransferase from Nostoc punctiforme (strain ATCC 29133 / PCC 73102).